A 371-amino-acid chain; its full sequence is Chemerin-like receptor 1 (371 aa).

The Extracellular segment spans residues 1-39; the sequence is MEYDAYNDSGIYDDEYSDGFGYFVDLEEASPWEAKVAPV. Residue N7 is glycosylated (N-linked (GlcNAc...) asparagine). A helical membrane pass occupies residues 40–62; sequence FLVVIYSLVCFLGLLGNGLVIVI. Topologically, residues 63 to 73 are cytoplasmic; that stretch reads ATFKMKKTVNT. Residues 74–95 form a helical membrane-spanning segment; it reads VWFVNLAVADFLFNIFLPMHIT. The Extracellular segment spans residues 96-112; the sequence is YAAMDYHWVFGKAMCKI. A disulfide bridge links C110 with C187. Residues 113-133 form a helical membrane-spanning segment; sequence SNFLLSHNMYTSVFLLTVISF. Residues 134-152 are Cytoplasmic-facing; that stretch reads DRCISVLLPVWSQNHRSIR. A helical transmembrane segment spans residues 153 to 174; that stretch reads LAYMTCSAVWVLAFFLSSPSLV. Over 175-222 the chain is Extracellular; the sequence is FRDTANIHGKITCFNNFSLAAPESSPHPAHSQVVSTGYSRHVAVTVTR. N190 is a glycosylation site (N-linked (GlcNAc...) asparagine). The helical transmembrane segment at 223–243 threads the bilayer; the sequence is FLCGFLIPVFIITACYLTIVF. Topologically, residues 244–259 are cytoplasmic; that stretch reads KLQRNRLAKNKKPFKI. Residues 260–280 traverse the membrane as a helical segment; that stretch reads IITIIITFFLCWCPYHTLYLL. Topologically, residues 281 to 298 are extracellular; sequence ELHHTAVPSSVFSLGLPL. A helical membrane pass occupies residues 299–318; sequence ATAVAIANSCMNPILYVFMG. Topologically, residues 319–371 are cytoplasmic; the sequence is HDFRKFKVALFSRLANALSEDTGPSSYPSHRSFTKMSSLNEKASVNEKETSTL. S337 bears the Phosphoserine mark. T340 is subject to Phosphothreonine. S347, S350, and S356 each carry phosphoserine. Position 370 is a phosphothreonine (T370).

This sequence belongs to the chemokine-like receptor (CMKLR) family. In terms of tissue distribution, expressed in the differentiated adipocytes (at protein level). Ubiquitous. Highly expressed in adipose tissue and immature plasmacytoid dendritic cells (DCs) and at lower levels in myeloid DCs, macrophages, and NK cells. Expressed on macrophages isolated from different tissues, including peritoneal cavities, pleural cavities and spleen.

It is found in the cell membrane. Receptor for the chemoattractant adipokine chemerin/RARRES2 and for the omega-3 fatty acid derived molecule resolvin E1. Interaction with RARRES2 initiates activation of G proteins G(i)/G(o) and beta-arrestin pathways inducing cellular responses via second messenger pathways such as intracellular calcium mobilization, phosphorylation of MAP kinases MAPK1/MAPK3 (ERK1/2), TYRO3, MAPK14/P38MAPK and PI3K leading to multifunctional effects, like, reduction of immune responses, enhancing of adipogenesis and angionesis. Resolvin E1 down-regulates cytokine production in macrophages by reducing the activation of MAPK1/3 (ERK1/2) and NF-kappa-B. Positively regulates adipogenesis and adipocyte metabolism. The polypeptide is Chemerin-like receptor 1 (Cmklr1) (Mus musculus (Mouse)).